A 953-amino-acid chain; its full sequence is MITSAAGIISLLDEEEPQLKEFALHKLNAVVNDFWAEISESVDKIEVLYEDEGFRSRQFAALVASKVFYHLGAFEESLNYALGAGDLFNVNDNSEYVETIIAKCIDHYTKQCVENADLPEGEKKPIDQRLEGIVNKMFQRCLDDHKYKQAIGIALETRRLDVFEKTILESNDVPGMLAYSLKLCMSLMQNKQFRNKVLRVLVKIYMNLEKPDFINVCQCLIFLDDTQAVSDILEKLVKEDNLLMAYQICFDLYESASQQFLSSVIQNLRTVGTPIASVPGSTNTGTVPGPEKDSDSMETEEKTAGAVAGKTPDASPEPKDQTLKMIKILSGEMAIELHLQFLIRNNNTDLMILKNTKDAVRNSVCHTATVIANSFMHCGTTSDQFLRDNLEWLARATNWAKFTATASLGVIHKGHEKEALQLMATYLPKDTSPGSAYQEGGGLYALGLIHANHGGDIIDYLLNQLKNASNDIVRHGGSLGLGLAAMGTARQDVYDLLKTNLYQDDAVTGEAAGLALGLVMLGSKNTQAIEDMVGYAQETQHEKILRGLAVGIALVMYGRMEEADALIESLCRDKDPILRRSGMYTVAMAYCGSGNNKAIRRLLHVAVSDVNDDVRRAAVESLGFILFRTPEQCPSVVSLLSESYNPHVRYGAAMALGVCCAGTGNKEAINLLEPMTNDPVNYVRQGALIASALIMIQQTEITCPKVNQFRQLYSKVINDKHDDVMAKFGAILAQGILDAGGHNVTISLQSRTGHTHMPSVVGVLVFTQFWFWFPLSHFLSLAYTPTCIIGLNKDLKMPKVQYKSNCKPSTFAYPAPLEVPKEKEKEKVSTAVLSITAKAKKKEKEKEKKEEEKMEVDEAEKKEEKEKKKEPEPNFQLLDNPARVMPAQLKVLSMTETCRYQPFKPLSIGGIIILKDTSEDIEELVEPVAAHGPKIEEEEQEPEPPEPFEYIDD.

An N-acetylmethionine modification is found at Met1. Thr273 is modified (phosphothreonine). The tract at residues 277–319 (SVPGSTNTGTVPGPEKDSDSMETEEKTAGAVAGKTPDASPEPK) is disordered. Over residues 290 to 303 (PEKDSDSMETEEKT) the composition is skewed to basic and acidic residues. Lys310 carries the N6-acetyllysine modification. Residue Thr311 is modified to Phosphothreonine. A Phosphoserine modification is found at Ser315. PC repeat units follow at residues 403-436 (TATA…PGSA), 441-474 (GGLY…DIVR), 476-510 (GGSL…VTGE), 511-545 (AAGL…EKIL), 547-580 (GLAV…ILRR), 581-616 (SGMY…DVRR), 617-649 (AAVE…PHVR), 651-685 (GAAM…YVRQ), 686-726 (GALI…DVMA), and 729-761 (GAIL…PSVV). An N6-acetyllysine modification is found at Lys720. At Thr830 the chain carries Phosphothreonine. Position 834 is a phosphoserine (Ser834). Disordered regions lie at residues 839–881 (AKKK…LDNP) and 930–953 (AHGP…YIDD). Composition is skewed to basic and acidic residues over residues 842 to 852 (KEKEKEKKEEE) and 859 to 872 (AEKK…KEPE). Over residues 936-953 (EEEEQEPEPPEPFEYIDD) the composition is skewed to acidic residues.

This sequence belongs to the proteasome subunit S1 family. As to quaternary structure, component of the 19S proteasome regulatory particle complex. The 26S proteasome consists of a 20S core particle (CP) and two 19S regulatory subunits (RP). The regulatory particle is made of a lid composed of 9 subunits, a base containing 6 ATPases and few additional components including PSMD1. Interacts with ADRM1. Interacts with ZFAND1.

Its function is as follows. Component of the 26S proteasome, a multiprotein complex involved in the ATP-dependent degradation of ubiquitinated proteins. This complex plays a key role in the maintenance of protein homeostasis by removing misfolded or damaged proteins, which could impair cellular functions, and by removing proteins whose functions are no longer required. Therefore, the proteasome participates in numerous cellular processes, including cell cycle progression, apoptosis, or DNA damage repair. The sequence is that of 26S proteasome non-ATPase regulatory subunit 1 (Psmd1) from Rattus norvegicus (Rat).